A 464-amino-acid polypeptide reads, in one-letter code: 3-isopropylmalate dehydratase large subunit (464 aa).

[4Fe-4S] cluster-binding residues include Cys337, Cys397, and Cys400.

Belongs to the aconitase/IPM isomerase family. LeuC type 1 subfamily. As to quaternary structure, heterodimer of LeuC and LeuD. [4Fe-4S] cluster is required as a cofactor.

It carries out the reaction (2R,3S)-3-isopropylmalate = (2S)-2-isopropylmalate. It functions in the pathway amino-acid biosynthesis; L-leucine biosynthesis; L-leucine from 3-methyl-2-oxobutanoate: step 2/4. In terms of biological role, catalyzes the isomerization between 2-isopropylmalate and 3-isopropylmalate, via the formation of 2-isopropylmaleate. The sequence is that of 3-isopropylmalate dehydratase large subunit from Bacillus cereus (strain ATCC 14579 / DSM 31 / CCUG 7414 / JCM 2152 / NBRC 15305 / NCIMB 9373 / NCTC 2599 / NRRL B-3711).